We begin with the raw amino-acid sequence, 862 residues long: Protein PRQFV-amide (862 aa).

The N-terminal stretch at 1 to 20 (MSSQLLICSVFVLFTFGPNS) is a signal peptide. A propeptide spanning residues 21 to 79 (FPSCLAQEQAGNSDATQLSADAKAPESAKDKSGDVQNDGTKSVRSKRDLEIDFGSGDVQ) is cleaved from the precursor. The tract at residues 32–68 (NSDATQLSADAKAPESAKDKSGDVQNDGTKSVRSKRD) is disordered. Basic and acidic residues predominate over residues 43–53 (KAPESAKDKSG). Val-86 bears the Valine amide mark. The propeptide occupies 90-149 (AAPPVFQTPLVQDKISGFIPSETESPVIGEFAFPGSVFMDDEEALGAEEEPMDDEDLEFY). Valine amide is present on Val-156. Positions 160 to 175 (GIDDYLLQEKLKDFIE) are excised as a propeptide. Residues Val-182, Val-190, Val-198, Val-206, Val-214, Val-222, Val-230, Val-238, and Val-246 each carry the valine amide modification. Positions 250–259 (EADPSFLFED) are excised as a propeptide. Val-266 is subject to Valine amide. Positions 270–300 (SLDFLGGANWYNPYDVTMEPQSEGSDLQGFS) are excised as a propeptide. The residue at position 307 (Val-307) is a Valine amide. A propeptide spanning residues 311-319 (DAFDMFEFS) is cleaved from the precursor. Residue Val-326 is modified to Valine amide. The propeptide occupies 330–338 (DQDEMFDFS). At Val-345 the chain carries Valine amide. The propeptide occupies 349 to 357 (DLQEFFDLS). The residue at position 364 (Val-364) is a Valine amide. The propeptide occupies 368-376 (EFDDEIDFS). Residue Val-383 is modified to Valine amide. Residues 387 to 395 (ENDDDFDLS) constitute a propeptide that is removed on maturation. Valine amide is present on Val-402. The propeptide occupies 406-414 (ENDDEFDLS). Val-421 is subject to Valine amide. Positions 424 to 434 (RENDDELEFSK) are enriched in basic and acidic residues. Positions 424 to 528 (RENDDELEFS…NNDDLDFSKR (105 aa)) are disordered. Residues 425–433 (ENDDELEFS) constitute a propeptide that is removed on maturation. At Val-440 the chain carries Valine amide. A compositionally biased stretch (basic and acidic residues) spans 441 to 452 (GKREDDEIDFSK). Positions 444–451 (EDDEIDFS) are excised as a propeptide. Residue Val-458 is modified to Valine amide. Basic and acidic residues predominate over residues 459 to 471 (GKRENDGEIDFSK). Positions 462–470 (ENDGEIDFS) are excised as a propeptide. Position 477 is a valine amide (Val-477). Basic and acidic residues predominate over residues 478–490 (GKRENDDEIDFSK). Residues 481-489 (ENDDEIDFS) constitute a propeptide that is removed on maturation. Valine amide is present on Val-496. Over residues 497–508 (GKREDGEIDFSK) the composition is skewed to basic and acidic residues. The propeptide occupies 500–507 (EDGEIDFS). Position 514 is a valine amide (Val-514). Over residues 515-527 (GKRENNDDLDFSK) the composition is skewed to basic and acidic residues. Positions 518–526 (ENNDDLDFS) are excised as a propeptide. At Val-533 the chain carries Valine amide. Positions 537–545 (EVDDEIDFS) are excised as a propeptide. Residues 549-634 (RQFVGKREND…RQFVGKREND (86 aa)) form a disordered region. Valine amide is present on Val-552. A compositionally biased stretch (basic and acidic residues) spans 553 to 565 (GKRENDDDLDFSK). The propeptide occupies 556–564 (ENDDDLDFS). The residue at position 571 (Val-571) is a Valine amide. Residues 572–584 (GKRENDDDLEFSK) are compositionally biased toward basic and acidic residues. Residues 575–583 (ENDDDLEFS) constitute a propeptide that is removed on maturation. Val-590 is modified (valine amide). A propeptide spanning residues 594 to 602 (ENDPLLDFS) is cleaved from the precursor. At Val-609 the chain carries Valine amide. The span at 610–622 (GKRENDDDLDFSK) shows a compositional bias: basic and acidic residues. Positions 613 to 621 (ENDDDLDFS) are excised as a propeptide. Residue Val-628 is modified to Valine amide. A propeptide spanning residues 632-640 (ENDPLIDFS) is cleaved from the precursor. Val-647 is modified (valine amide). Positions 651-659 (ESDGDFELS) are excised as a propeptide. The residue at position 666 (Val-666) is a Valine amide. Residues 670-677 (DVDGPGLS) constitute a propeptide that is removed on maturation. Val-684 carries the valine amide modification. Positions 688-695 (EDYDIDFA) are excised as a propeptide. Residue Val-702 is modified to Valine amide. A propeptide spanning residues 706-714 (GNEDEFEMS) is cleaved from the precursor. The residue at position 721 (Val-721) is a Valine amide. Residues 724–757 (RNFEELDQDFLRHMHDILDKRIPQFVSLPSLTAA) constitute a propeptide that is removed on maturation. The residue at position 764 (Val-764) is a Valine amide. A propeptide spanning residues 768-812 (SDAAFLETLRHLRDYVGGQDEQNVSEFSYQHPYPSDLNDVGLIQQ) is cleaved from the precursor. Val-819 bears the Valine amide mark. Residues 823 to 862 (GGDVDDINTTYRLGDFVSQPMSFVEEPSWLCRQLNAFGIS) constitute a propeptide that is removed on maturation.

Expressed abundantly in the abdominal ganglion, much less in the pedal and cerebral ganglia, and rarely in the buccal and pleural ganglia.

The protein resides in the secreted. Its function is as follows. PRQFV-amide may act as a modulator within the feeding system as well as in other systems of Aplysia. This chain is Protein PRQFV-amide, found in Aplysia californica (California sea hare).